Reading from the N-terminus, the 132-residue chain is Cell division protein FtsL (132 aa).

Residues 1–50 (MAELKKMRHNHYDVPVMDEPVIASQIKKTNQKKESFQLPQKKLNKISVFE) are Cytoplasmic-facing. The chain crosses the membrane as a helical span at residues 51–71 (KILCILLLCSIVGIVVITIQI). Residues 72-132 (RTTISETMNN…EIDGNLRKVK (61 aa)) are Extracellular-facing.

This sequence belongs to the FtsL family.

The protein resides in the cell membrane. Essential cell division protein. The polypeptide is Cell division protein FtsL (Melissococcus plutonius (strain ATCC 35311 / DSM 29964 / CIP 104052 / LMG 20360 / NCIMB 702443)).